A 66-amino-acid polypeptide reads, in one-letter code: EGSGGSGSSGNFTTGSNIHMSSVTNTSNAGTGTSGTGNSGGGSGGGTGPGSGAIPPVTLTESLLNK.

The tract at residues 1–66 is disordered; that stretch reads EGSGGSGSSG…VTLTESLLNK (66 aa). The segment covering 9-31 has biased composition (low complexity); that stretch reads SGNFTTGSNIHMSSVTNTSNAGT. Repeat copies occupy residues 30–31, 32–33, 35–36, and 37–38. The interval 30–53 is 4 X 2 AA tandem repeats of G-[TN]; the sequence is GTGTSGTGNSGGGSGGGTGPGSGA. Residues 32 to 51 are compositionally biased toward gly residues; it reads GTSGTGNSGGGSGGGTGPGS.

In terms of assembly, forms a heterodimer with timeless (TIM); the complex then translocates into the nucleus. Post-translationally, phosphorylated with a circadian rhythmicity, probably by the double-time protein (dbt). Phosphorylation could be implicated in the stability of per monomer and in the formation of heterodimer per-tim.

The protein resides in the nucleus. The protein localises to the cytoplasm. It is found in the perinuclear region. Functionally, essential for biological clock functions. Determines the period length of circadian and ultradian rhythms; an increase in PER dosage leads to shortened circadian rhythms and a decrease leads to lengthened circadian rhythms. Essential for the circadian rhythmicity of locomotor activity, eclosion behavior, and for the rhythmic component of the male courtship song that originates in the thoracic nervous system. The biological cycle depends on the rhythmic formation and nuclear localization of the TIM-PER complex. Light induces the degradation of TIM, which promotes elimination of PER. Nuclear activity of the heterodimer coordinatively regulates PER and TIM transcription through a negative feedback loop. Behaves as a negative element in circadian transcriptional loop. Does not appear to bind DNA, suggesting indirect transcriptional inhibition. The chain is Period circadian protein (per) from Drosophila saltans (Fruit fly).